Reading from the N-terminus, the 252-residue chain is Gamma carbonic anhydrase-like 1, mitochondrial (252 aa).

The N-terminal 29 residues, 1–29 (MATSIARLSRRGVTSNLIRRCFAAEAALA), are a transit peptide targeting the mitochondrion. Substrate-binding positions include 99–101 (RGD) and 114–115 (QE). His-120 contributes to the Zn(2+) binding site. 3 residues coordinate substrate: Arg-148, Gln-160, and Tyr-227.

It belongs to the gamma-class carbonic anhydrase family. Component of the mitochondrial oxidoreductase respiratory chain complex I; element of the extra matrix-exposed domain, which is attached to the membrane arm of this complex. Interacts with GAMMACA2.

It is found in the mitochondrion membrane. Its function is as follows. Involved in complex I assembly in mitochondria and respiration. The chain is Gamma carbonic anhydrase-like 1, mitochondrial (GAMMACAL1) from Arabidopsis thaliana (Mouse-ear cress).